The following is a 319-amino-acid chain: Malate dehydrogenase (319 aa).

NAD(+)-binding positions include Gly7–Gly13 and Asp34. Residues Arg81 and Arg87 each contribute to the substrate site. Residues Asn94 and Ile117–Asn119 each bind NAD(+). Substrate contacts are provided by Asn119 and Arg153. His177 functions as the Proton acceptor in the catalytic mechanism. Position 227 (Met227) interacts with NAD(+).

It belongs to the LDH/MDH superfamily. MDH type 1 family. As to quaternary structure, homodimer.

The enzyme catalyses (S)-malate + NAD(+) = oxaloacetate + NADH + H(+). Functionally, catalyzes the reversible oxidation of malate to oxaloacetate. The protein is Malate dehydrogenase of Psychromonas ingrahamii (strain DSM 17664 / CCUG 51855 / 37).